A 159-amino-acid polypeptide reads, in one-letter code: uncharacterized protein (159 aa).

Helical transmembrane passes span 59 to 79 (IGAL…ALVY) and 91 to 113 (VFSV…RRVC).

It is found in the cell membrane. This is an uncharacterized protein from Treponema pallidum (strain Nichols).